The chain runs to 928 residues: Isoleucine--tRNA ligase (928 aa).

Positions 57–67 (PFANGNIHMGH) match the 'HIGH' region motif. Glu552 contributes to the L-isoleucyl-5'-AMP binding site. A 'KMSKS' region motif is present at residues 593 to 597 (KMSKS). Residue Lys596 coordinates ATP. The Zn(2+) site is built by Cys887, Cys890, Cys907, and Cys910.

Belongs to the class-I aminoacyl-tRNA synthetase family. IleS type 1 subfamily. In terms of assembly, monomer. Zn(2+) is required as a cofactor.

The protein localises to the cytoplasm. The catalysed reaction is tRNA(Ile) + L-isoleucine + ATP = L-isoleucyl-tRNA(Ile) + AMP + diphosphate. Functionally, catalyzes the attachment of isoleucine to tRNA(Ile). As IleRS can inadvertently accommodate and process structurally similar amino acids such as valine, to avoid such errors it has two additional distinct tRNA(Ile)-dependent editing activities. One activity is designated as 'pretransfer' editing and involves the hydrolysis of activated Val-AMP. The other activity is designated 'posttransfer' editing and involves deacylation of mischarged Val-tRNA(Ile). This Latilactobacillus sakei subsp. sakei (strain 23K) (Lactobacillus sakei subsp. sakei) protein is Isoleucine--tRNA ligase.